A 166-amino-acid polypeptide reads, in one-letter code: Bud site selection protein 20 (166 aa).

A Nuclear localization signal motif is present at residues 7–16; sequence KRYKTKRRTR. The segment at 17–31 is nuclear export signal-like (NES-like); that stretch reads DLDLIYNDLSTKESV. A C2H2-type zinc finger spans residues 49–73; the sequence is HYCIHCAKYMETAIALKTHLKGKVH.

Belongs to the ZNF593/BUD20 C2H2-type zinc-finger protein family. As to quaternary structure, associates with pre-60S ribosomal particles; released from the pre-60S particle very early in the cytoplasm.

Its subcellular location is the nucleus. The protein localises to the cytoplasm. Its function is as follows. Involved in pre-60S ribosomal particles maturation by promoting the nuclear export of the 60S ribosome. Involved in positioning the proximal bud pole signal. This chain is Bud site selection protein 20, found in Saccharomyces cerevisiae (strain ATCC 204508 / S288c) (Baker's yeast).